A 453-amino-acid polypeptide reads, in one-letter code: Bifunctional protein GlmU (453 aa).

Residues 1–226 are pyrophosphorylase; the sequence is MVAVAILAAG…YLEITGINDR (226 aa). UDP-N-acetyl-alpha-D-glucosamine-binding positions include 7 to 10, Lys-21, Gln-73, and 78 to 79; these read LAAG and GT. Asp-103 serves as a coordination point for Mg(2+). Residues Gly-140, Glu-155, Asn-170, and Asn-224 each contribute to the UDP-N-acetyl-alpha-D-glucosamine site. Asn-224 serves as a coordination point for Mg(2+). The segment at 227 to 247 is linker; sequence KQLAMANGILQNRVKDHWMAQ. The segment at 248-453 is N-acetyltransferase; the sequence is GVTLIDPDSI…EWKKTIESKK (206 aa). Arg-329 and Lys-347 together coordinate UDP-N-acetyl-alpha-D-glucosamine. The active-site Proton acceptor is the His-359. UDP-N-acetyl-alpha-D-glucosamine contacts are provided by Tyr-362 and Asn-373. Acetyl-CoA-binding positions include Ala-376, 382 to 383, Ala-419, and Arg-436; that span reads NY.

In the N-terminal section; belongs to the N-acetylglucosamine-1-phosphate uridyltransferase family. The protein in the C-terminal section; belongs to the transferase hexapeptide repeat family. Homotrimer. It depends on Mg(2+) as a cofactor.

It localises to the cytoplasm. It catalyses the reaction alpha-D-glucosamine 1-phosphate + acetyl-CoA = N-acetyl-alpha-D-glucosamine 1-phosphate + CoA + H(+). The enzyme catalyses N-acetyl-alpha-D-glucosamine 1-phosphate + UTP + H(+) = UDP-N-acetyl-alpha-D-glucosamine + diphosphate. It participates in nucleotide-sugar biosynthesis; UDP-N-acetyl-alpha-D-glucosamine biosynthesis; N-acetyl-alpha-D-glucosamine 1-phosphate from alpha-D-glucosamine 6-phosphate (route II): step 2/2. Its pathway is nucleotide-sugar biosynthesis; UDP-N-acetyl-alpha-D-glucosamine biosynthesis; UDP-N-acetyl-alpha-D-glucosamine from N-acetyl-alpha-D-glucosamine 1-phosphate: step 1/1. The protein operates within bacterial outer membrane biogenesis; LPS lipid A biosynthesis. Catalyzes the last two sequential reactions in the de novo biosynthetic pathway for UDP-N-acetylglucosamine (UDP-GlcNAc). The C-terminal domain catalyzes the transfer of acetyl group from acetyl coenzyme A to glucosamine-1-phosphate (GlcN-1-P) to produce N-acetylglucosamine-1-phosphate (GlcNAc-1-P), which is converted into UDP-GlcNAc by the transfer of uridine 5-monophosphate (from uridine 5-triphosphate), a reaction catalyzed by the N-terminal domain. The protein is Bifunctional protein GlmU of Rippkaea orientalis (strain PCC 8801 / RF-1) (Cyanothece sp. (strain PCC 8801)).